The primary structure comprises 74 residues: Small ribosomal subunit protein bS21 (74 aa).

It belongs to the bacterial ribosomal protein bS21 family.

The chain is Small ribosomal subunit protein bS21 from Coxiella burnetii (strain Dugway 5J108-111).